A 165-amino-acid polypeptide reads, in one-letter code: Endoribonuclease YbeY (165 aa).

Positions 126, 130, and 136 each coordinate Zn(2+).

The protein belongs to the endoribonuclease YbeY family. Requires Zn(2+) as cofactor.

The protein resides in the cytoplasm. Its function is as follows. Single strand-specific metallo-endoribonuclease involved in late-stage 70S ribosome quality control and in maturation of the 3' terminus of the 16S rRNA. The protein is Endoribonuclease YbeY of Ruegeria pomeroyi (strain ATCC 700808 / DSM 15171 / DSS-3) (Silicibacter pomeroyi).